We begin with the raw amino-acid sequence, 978 residues long: Rab3 GTPase-activating protein catalytic subunit (978 aa).

Disordered stretches follow at residues 533–554, 586–621, and 908–936; these read EGKK…TASD, HSDT…RLHQ, and EEEP…GREL. Over residues 540 to 554 the composition is skewed to polar residues; it reads LYSSSESSVNKTASD. 2 stretches are compositionally biased toward basic and acidic residues: residues 586–619 and 909–922; these read HSDT…EGRL and EEPK…DRRQ.

The protein belongs to the Rab3-GAP catalytic subunit family. The Rab3 GTPase-activating complex is a heterodimer composed of rab3gap1 and rab3gap2. The Rab3 GTPase-activating complex interacts with DMXL2. Interacts with LMAN1.

It is found in the cytoplasm. It localises to the endoplasmic reticulum. The protein localises to the golgi apparatus. The protein resides in the cis-Golgi network. In terms of biological role, catalytic subunit of the Rab3 GTPase-activating (Rab3GAP) complex composed of rab3gap1 and rab3gap2, which has GTPase-activating protein (GAP) activity towards various Rab3 subfamily members (RAB3A, RAB3B, RAB3C and RAB3D), RAB5A and RAB43, and guanine nucleotide exchange factor (GEF) activity towards RAB18. As part of the Rab3GAP complex, acts as a GAP for Rab3 proteins by converting active RAB3-GTP to the inactive form RAB3-GDP. Rab3 proteins are involved in regulated exocytosis of neurotransmitters and hormones. The Rab3GAP complex, acts as a GEF for RAB18 by promoting the conversion of inactive RAB18-GDP to the active form RAB18-GTP. Recruits and stabilizes RAB18 at the cis-Golgi membrane where RAB18 is most likely activated. Also involved in RAB18 recruitment at the endoplasmic reticulum (ER) membrane where it maintains proper ER structure. Required for normal eye and brain development. May participate in neurodevelopmental processes such as proliferation, migration and differentiation before synapse formation, and non-synaptic vesicular release of neurotransmitters. The polypeptide is Rab3 GTPase-activating protein catalytic subunit (rab3gap1) (Xenopus laevis (African clawed frog)).